We begin with the raw amino-acid sequence, 411 residues long: Zinc finger protein draculin (411 aa).

The interval 1-33 (MKNTTKPCRTEHHNAEGQRDRMEGNKKGETKAK) is disordered. Basic and acidic residues predominate over residues 8-32 (CRTEHHNAEGQRDRMEGNKKGETKA). C2H2-type zinc fingers lie at residues 36-58 (VACS…MRVH), 64-86 (YRCD…LDIH), 92-114 (YTCD…MTLH), 120-142 (YKCD…MKLH), 148-170 (HKCE…LMVH), 176-198 (YTCD…MNIH), 204-226 (YTCD…MRFH), 232-254 (FTCD…MKIH), 260-282 (YTCD…MTHH), 288-310 (FHCD…IKTH), 316-338 (YSCL…EKRH), 344-366 (FMCF…LPVH), and 372-394 (YMCS…EKTH).

As to expression, specifically expressed in the hematopoietic lineage during embryogenesis; first expressed at the late blastula stage around the blastoderm margin. During gastrulation, restricted to the ventral mesoderm, the presumptive prechordal plate and the dorso-marginal cells of the organizer. At the 3-somite stage, strongly expressed in a caudal domain (marking the erythroid lineage) and a cephalic domain of the lateral mesoderm. At the 8- to 10-somite stage, caudal expression is in two bands of lateral mesoderm which later converge at the midline. Anterior expression is also in two bands of lateral mesoderm which converge as two patches at the midline by the 15-somite stage, with increased scattering of single cells (macrophage precursors) away from the midline to the yolksac. Once at the yolksac, expression is lost. By 20-24 hours post-fertilization (hpf), expressed in proerythroblasts in the erythroid blood island centered above the uro-genital opening. Expression persists in circulating erythroblasts but is lost in mature erythrocytes.

The sequence is that of Zinc finger protein draculin from Danio rerio (Zebrafish).